Here is a 476-residue protein sequence, read N- to C-terminus: Serine carboxypeptidase 2 (476 aa).

Positions 1–34 (MRTTTRRLPPAPAAAAVLLAALTCLLLRPAAVAA) are cleaved as a signal peptide. Intrachain disulfides connect Cys97-Cys353, Cys254-Cys266, and Cys290-Cys320. 2 N-linked (GlcNAc...) asparagine glycosylation sites follow: Asn148 and Asn159. Ser190 is an active-site residue. Asn291 is a glycosylation site (N-linked (GlcNAc...) asparagine). A propeptide spans 295–313 (SSSSSSLSRRRTRGRYPWL) (linker peptide). The residue at position 314 (Thr314) is a Blocked amino end (Thr). N-linked (GlcNAc...) asparagine glycosylation is found at Asn341 and Asn347. Asn352 is a glycosylation site (N-linked (GlcNAc...) asparagine; partial). O-linked (GalNAc...) threonine; in variant 351-AT-352 glycosylation occurs at Asn352. Catalysis depends on residues Asp390 and His443. N-linked (GlcNAc...) asparagine glycosylation is present at Asn472.

This sequence belongs to the peptidase S10 family. As to quaternary structure, carboxypeptidase II is a dimer, where each monomer is composed of two chains linked by a disulfide bond.

The protein resides in the secreted. It carries out the reaction Preferential release of a C-terminal arginine or lysine residue.. In terms of biological role, may be involved in the degradation of small peptides (2-5 residues) or in the degradation of storage proteins in the embryo. The polypeptide is Serine carboxypeptidase 2 (CBP2) (Hordeum vulgare (Barley)).